The chain runs to 386 residues: 3-ketoacyl-CoA thiolase (386 aa).

C91 serves as the catalytic Acyl-thioester intermediate. Active-site proton acceptor residues include H342 and C372.

It belongs to the thiolase-like superfamily. Thiolase family. As to quaternary structure, heterotetramer of two alpha chains (FadB) and two beta chains (FadA).

The protein resides in the cytoplasm. It catalyses the reaction an acyl-CoA + acetyl-CoA = a 3-oxoacyl-CoA + CoA. It functions in the pathway lipid metabolism; fatty acid beta-oxidation. Catalyzes the final step of fatty acid oxidation in which acetyl-CoA is released and the CoA ester of a fatty acid two carbons shorter is formed. The sequence is that of 3-ketoacyl-CoA thiolase from Colwellia psychrerythraea (strain 34H / ATCC BAA-681) (Vibrio psychroerythus).